The sequence spans 440 residues: Chromosome partition protein MukF (440 aa).

The tract at residues 208 to 236 (LSETSGTLRELQDTLEAAGDKLQANLLRI) is leucine-zipper.

The protein belongs to the MukF family. In terms of assembly, interacts, and probably forms a ternary complex, with MukE and MukB via its C-terminal region. The complex formation is stimulated by calcium or magnesium. It is required for an interaction between MukE and MukB.

It localises to the cytoplasm. It is found in the nucleoid. Its function is as follows. Involved in chromosome condensation, segregation and cell cycle progression. May participate in facilitating chromosome segregation by condensation DNA from both sides of a centrally located replisome during cell division. Not required for mini-F plasmid partitioning. Probably acts via its interaction with MukB and MukE. Overexpression results in anucleate cells. It has a calcium binding activity. The chain is Chromosome partition protein MukF from Salmonella typhi.